A 367-amino-acid polypeptide reads, in one-letter code: MTVMKFDLIKKEGKARRGKITFPRGDIQTPAFMPVGTYGAVKSLSPVELKEMGAEIILGNTFHLWLRPGTEIIKKHGSLHGFNGWDKPILTDSGGFQVFSLGKMRKLTEEGVTFKSPINSSKVFLSPEISMQVQRDLGSDIVMCFDECTPYPATEKEAKESMELSMRWAKRSKEAHGDNPSALFGIIQGGMYEHLRDESLAKLKEIDFDGFAIGGLSVGEPKEDMIRILDHTAHQMPEDKPRYLMGVGTPKDLVEAVYRGVDMFDCVMPSRNARNGHIFTSEGVIKIRNSKYKDDTSPLDPNCDCYTCKNFTKSYLHHLDKTKEILGSRLNTIHNLTFYQNLMKSIRKALDEGRFSEFRKEFLASYK.

The active-site Proton acceptor is the Asp-92. Substrate-binding positions include 92–96, Asp-146, Gln-188, and Gly-215; that span reads DSGGF. Residues 246-252 are RNA binding; that stretch reads GVGTPKD. Asp-265 serves as the catalytic Nucleophile. Cys-303, Cys-305, Cys-308, and His-334 together coordinate Zn(2+).

Belongs to the queuine tRNA-ribosyltransferase family. As to quaternary structure, homodimer. Within each dimer, one monomer is responsible for RNA recognition and catalysis, while the other monomer binds to the replacement base PreQ1. Zn(2+) serves as cofactor.

The catalysed reaction is 7-aminomethyl-7-carbaguanine + guanosine(34) in tRNA = 7-aminomethyl-7-carbaguanosine(34) in tRNA + guanine. It participates in tRNA modification; tRNA-queuosine biosynthesis. Its function is as follows. Catalyzes the base-exchange of a guanine (G) residue with the queuine precursor 7-aminomethyl-7-deazaguanine (PreQ1) at position 34 (anticodon wobble position) in tRNAs with GU(N) anticodons (tRNA-Asp, -Asn, -His and -Tyr). Catalysis occurs through a double-displacement mechanism. The nucleophile active site attacks the C1' of nucleotide 34 to detach the guanine base from the RNA, forming a covalent enzyme-RNA intermediate. The proton acceptor active site deprotonates the incoming PreQ1, allowing a nucleophilic attack on the C1' of the ribose to form the product. After dissociation, two additional enzymatic reactions on the tRNA convert PreQ1 to queuine (Q), resulting in the hypermodified nucleoside queuosine (7-(((4,5-cis-dihydroxy-2-cyclopenten-1-yl)amino)methyl)-7-deazaguanosine). This Francisella tularensis subsp. tularensis (strain FSC 198) protein is Queuine tRNA-ribosyltransferase.